The sequence spans 210 residues: CASP-like protein 3A1 (210 aa).

Topologically, residues 1 to 44 (MNGLKTPPEIGIQLPEAKVAAETGTMSGPLVPPRSDRSVRRGTD) are cytoplasmic. A helical transmembrane segment spans residues 45–65 (VAHVVLRFVCLLTSVIALSLM). Residues 66 to 94 (ATAKEAASISIYGFLLPVSSKWSFSDSFE) are Extracellular-facing. A helical membrane pass occupies residues 95–115 (YLVGVSAAVAAHALLQLIISV). Residues 116–130 (SRLLRKSPVIPSRNH) are Cytoplasmic-facing. A helical transmembrane segment spans residues 131 to 151 (AWLIFAGDQAFAYAMLSAGSA). Topologically, residues 152–185 (ASGVTNLNRTGIRHSPLPNFCKPLRSFCDHVAAS) are extracellular. N159 carries an N-linked (GlcNAc...) asparagine glycan. A helical membrane pass occupies residues 186–206 (IAFTFFSCFLLATSAILDVIW). At 207-210 (LSKY) the chain is on the cytoplasmic side.

It belongs to the Casparian strip membrane proteins (CASP) family. As to quaternary structure, homodimer and heterodimers.

The protein localises to the cell membrane. The sequence is that of CASP-like protein 3A1 from Vitis vinifera (Grape).